The following is a 279-amino-acid chain: Acetylglutamate kinase (279 aa).

Residues G62–G63, R84, and N177 contribute to the substrate site.

Belongs to the acetylglutamate kinase family. ArgB subfamily.

It localises to the cytoplasm. It carries out the reaction N-acetyl-L-glutamate + ATP = N-acetyl-L-glutamyl 5-phosphate + ADP. The protein operates within amino-acid biosynthesis; L-arginine biosynthesis; N(2)-acetyl-L-ornithine from L-glutamate: step 2/4. Catalyzes the ATP-dependent phosphorylation of N-acetyl-L-glutamate. This chain is Acetylglutamate kinase, found in Pseudothermotoga lettingae (strain ATCC BAA-301 / DSM 14385 / NBRC 107922 / TMO) (Thermotoga lettingae).